The following is a 504-amino-acid chain: Glycerol kinase (504 aa).

Thr12 provides a ligand contact to ADP. ATP-binding residues include Thr12, Thr13, and Ser14. Thr12 is a binding site for sn-glycerol 3-phosphate. Arg16 contributes to the ADP binding site. Positions 82, 83, 134, and 244 each coordinate sn-glycerol 3-phosphate. Positions 82, 83, 134, 244, and 245 each coordinate glycerol. Positions 266 and 309 each coordinate ADP. Thr266, Gly309, Gln313, and Gly410 together coordinate ATP. Residues Gly410 and Asn414 each contribute to the ADP site.

Belongs to the FGGY kinase family. Homotetramer and homodimer (in equilibrium).

It carries out the reaction glycerol + ATP = sn-glycerol 3-phosphate + ADP + H(+). The protein operates within polyol metabolism; glycerol degradation via glycerol kinase pathway; sn-glycerol 3-phosphate from glycerol: step 1/1. Activated by phosphorylation and inhibited by fructose 1,6-bisphosphate (FBP). In terms of biological role, key enzyme in the regulation of glycerol uptake and metabolism. Catalyzes the phosphorylation of glycerol to yield sn-glycerol 3-phosphate. This Alkaliphilus oremlandii (strain OhILAs) (Clostridium oremlandii (strain OhILAs)) protein is Glycerol kinase.